A 273-amino-acid chain; its full sequence is Hemin import ATP-binding protein HmuV (273 aa).

Residues 2–256 form the ABC transporter domain; the sequence is LTAHHLDVAR…AHIAQCYGFA (255 aa). 34-41 lines the ATP pocket; it reads GRNGAGKS.

It belongs to the ABC transporter superfamily. Heme (hemin) importer (TC 3.A.1.14.5) family. The complex is composed of two ATP-binding proteins (HmuV), two transmembrane proteins (HmuU) and a solute-binding protein (HmuT).

Its subcellular location is the cell inner membrane. Its function is as follows. Part of the ABC transporter complex HmuTUV involved in hemin import. Responsible for energy coupling to the transport system. The chain is Hemin import ATP-binding protein HmuV from Burkholderia ambifaria (strain ATCC BAA-244 / DSM 16087 / CCUG 44356 / LMG 19182 / AMMD) (Burkholderia cepacia (strain AMMD)).